Consider the following 530-residue polypeptide: Phosphoenolpyruvate carboxykinase (ATP) (530 aa).

3 residues coordinate substrate: Arg-58, Tyr-195, and Lys-201. ATP is bound by residues Lys-201, His-220, and 236 to 244; that span reads GLSGTGKTT. Mn(2+)-binding residues include Lys-201 and His-220. Asp-257 is a Mn(2+) binding site. ATP contacts are provided by residues Glu-285, Arg-321, 440 to 441, and Thr-446; that span reads RI. Arg-321 contacts substrate.

This sequence belongs to the phosphoenolpyruvate carboxykinase (ATP) family. The cofactor is Mn(2+).

Its subcellular location is the cytoplasm. The enzyme catalyses oxaloacetate + ATP = phosphoenolpyruvate + ADP + CO2. Its pathway is carbohydrate biosynthesis; gluconeogenesis. Functionally, involved in the gluconeogenesis. Catalyzes the conversion of oxaloacetate (OAA) to phosphoenolpyruvate (PEP) through direct phosphoryl transfer between the nucleoside triphosphate and OAA. The sequence is that of Phosphoenolpyruvate carboxykinase (ATP) from Staphylococcus aureus (strain bovine RF122 / ET3-1).